The following is a 275-amino-acid chain: 2,3,4,5-tetrahydropyridine-2,6-dicarboxylate N-succinyltransferase (275 aa).

Residues R108 and D145 each contribute to the substrate site.

This sequence belongs to the transferase hexapeptide repeat family. Homotrimer.

It is found in the cytoplasm. It carries out the reaction (S)-2,3,4,5-tetrahydrodipicolinate + succinyl-CoA + H2O = (S)-2-succinylamino-6-oxoheptanedioate + CoA. The protein operates within amino-acid biosynthesis; L-lysine biosynthesis via DAP pathway; LL-2,6-diaminopimelate from (S)-tetrahydrodipicolinate (succinylase route): step 1/3. The sequence is that of 2,3,4,5-tetrahydropyridine-2,6-dicarboxylate N-succinyltransferase from Maricaulis maris (strain MCS10) (Caulobacter maris).